Reading from the N-terminus, the 470-residue chain is Acyltransferase BOA11 (470 aa).

The active-site Proton acceptor is the histidine 156.

It belongs to the plant acyltransferase family.

The protein operates within polyketide biosynthesis. In terms of biological role, acyltransferase; part of the gene cluster B that mediates the biosynthesis of botcinic acid and its botcinin derivatives, acetate-derived polyketides that contribute to virulence when combined with the sesquiterpene botrydial. Botcinic acid and its derivatives have been shown to induce chlorosis and necrosis during host plant infection, but also have antifungal activities. Two polyketide synthases, BOA6 and BOA9, are involved in the biosynthesis of botcinins. BOA6 mediates the formation of the per-methylated tetraketide core by condensation of four units of malonyl-CoA with one unit of acetyl-CoA, which would be methylated in activated methylene groups to yield a bicyclic acid intermediate that could then either be converted to botrylactone derivatives or lose the starter acetate unit through a retro-Claisen type C-C bond cleavage to yield botcinin derivatives. The second polyketide synthase, BOA9, is probably required for the biosynthesis of the tetraketide side chain of botcinins. The methyltransferase (MT) domain within BOA6 is probably responsible for the incorporation of four methyl groups. The trans-enoyl reductase BOA5 might take over the enoyl reductase function of BOA6 that misses an ER domain. The monooxygenases BOA2, BOA3 and BOA4 might be involved in further hydroxylations at C4, C5 and C8, whereas BOA7, close to BOA9, could potentially be involved in the hydroxylation at C4 in the side chain of botcinins. In Botryotinia fuckeliana (strain B05.10) (Noble rot fungus), this protein is Acyltransferase BOA11.